Here is a 152-residue protein sequence, read N- to C-terminus: Nucleoside diphosphate kinase (152 aa).

ATP is bound by residues K11, F59, R87, T93, R104, and N114. Residue H117 is the Pros-phosphohistidine intermediate of the active site.

The protein belongs to the NDK family. As to quaternary structure, homotetramer. Requires Mg(2+) as cofactor.

It localises to the cytoplasm. The catalysed reaction is a 2'-deoxyribonucleoside 5'-diphosphate + ATP = a 2'-deoxyribonucleoside 5'-triphosphate + ADP. It carries out the reaction a ribonucleoside 5'-diphosphate + ATP = a ribonucleoside 5'-triphosphate + ADP. Its function is as follows. Major role in the synthesis of nucleoside triphosphates other than ATP. The ATP gamma phosphate is transferred to the NDP beta phosphate via a ping-pong mechanism, using a phosphorylated active-site intermediate. This is Nucleoside diphosphate kinase from Prochlorococcus marinus (strain MIT 9313).